The following is a 240-amino-acid chain: Ribosomal RNA large subunit methyltransferase E (240 aa).

Residues 1–28 (MSSSPRSPDARPLKVRVKSARTRSSSSQ) form a disordered region. Gly-80, Trp-82, Asp-103, Asp-119, and Asp-143 together coordinate S-adenosyl-L-methionine. Lys-183 acts as the Proton acceptor in catalysis.

It belongs to the class I-like SAM-binding methyltransferase superfamily. RNA methyltransferase RlmE family.

Its subcellular location is the cytoplasm. The enzyme catalyses uridine(2552) in 23S rRNA + S-adenosyl-L-methionine = 2'-O-methyluridine(2552) in 23S rRNA + S-adenosyl-L-homocysteine + H(+). In terms of biological role, specifically methylates the uridine in position 2552 of 23S rRNA at the 2'-O position of the ribose in the fully assembled 50S ribosomal subunit. This Azorhizobium caulinodans (strain ATCC 43989 / DSM 5975 / JCM 20966 / LMG 6465 / NBRC 14845 / NCIMB 13405 / ORS 571) protein is Ribosomal RNA large subunit methyltransferase E.